Reading from the N-terminus, the 86-residue chain is Cytochrome c oxidase subunit 12, mitochondrial (86 aa).

Positions 30–73 constitute a CHCH domain; it reads TKHCFQSYIDYFRCIKAKGEDFVPCKQFWHAYQSLCPMEWVERW. The Cx9C motif signature appears at 33–43; it reads CFQSYIDYFRC. Intrachain disulfides connect C33-C65 and C43-C54. The Cx10C motif signature appears at 54-65; it reads CKQFWHAYQSLC.

Belongs to the cytochrome c oxidase subunit 6B family. Component of the cytochrome c oxidase (complex IV, CIV), a multisubunit enzyme composed of a catalytic core of 3 subunits and several supernumerary subunits. The complex exists as a monomer or a dimer and forms supercomplexes (SCs) in the inner mitochondrial membrane with ubiquinol-cytochrome c oxidoreductase (cytochrome b-c1 complex, complex III, CIII).

The protein localises to the mitochondrion inner membrane. It participates in energy metabolism; oxidative phosphorylation. In terms of biological role, component of the cytochrome c oxidase, the last enzyme in the mitochondrial electron transport chain which drives oxidative phosphorylation. The respiratory chain contains 3 multisubunit complexes succinate dehydrogenase (complex II, CII), ubiquinol-cytochrome c oxidoreductase (cytochrome b-c1 complex, complex III, CIII) and cytochrome c oxidase (complex IV, CIV), that cooperate to transfer electrons derived from NADH and succinate to molecular oxygen, creating an electrochemical gradient over the inner membrane that drives transmembrane transport and the ATP synthase. Cytochrome c oxidase is the component of the respiratory chain that catalyzes the reduction of oxygen to water. Electrons originating from reduced cytochrome c in the intermembrane space (IMS) are transferred via the dinuclear copper A center (CU(A)) of subunit 2 and heme A of subunit 1 to the active site in subunit 1, a binuclear center (BNC) formed by heme A3 and copper B (CU(B)). The BNC reduces molecular oxygen to 2 water molecules using 4 electrons from cytochrome c in the IMS and 4 protons from the mitochondrial matrix. The chain is Cytochrome c oxidase subunit 12, mitochondrial (cox12) from Schizosaccharomyces pombe (strain 972 / ATCC 24843) (Fission yeast).